The sequence spans 222 residues: Cytidylate kinase (222 aa).

10–18 (GPSASGKGT) is an ATP binding site.

This sequence belongs to the cytidylate kinase family. Type 1 subfamily.

The protein localises to the cytoplasm. It carries out the reaction CMP + ATP = CDP + ADP. The catalysed reaction is dCMP + ATP = dCDP + ADP. The polypeptide is Cytidylate kinase (Chromobacterium violaceum (strain ATCC 12472 / DSM 30191 / JCM 1249 / CCUG 213 / NBRC 12614 / NCIMB 9131 / NCTC 9757 / MK)).